The primary structure comprises 293 residues: Phosphate-binding protein PstS 2 (293 aa).

The signal sequence occupies residues Met-1–Gly-23. The N-palmitoyl cysteine moiety is linked to residue Cys-24. The S-diacylglycerol cysteine moiety is linked to residue Cys-24.

It belongs to the PstS family. In terms of assembly, the complex is composed of two ATP-binding proteins (PstB), two transmembrane proteins (PstC and PstA) and a solute-binding protein (PstS).

The protein resides in the cell membrane. Part of the ABC transporter complex PstSACB involved in phosphate import. The protein is Phosphate-binding protein PstS 2 (pstS2) of Streptococcus agalactiae serotype III (strain NEM316).